Here is a 291-residue protein sequence, read N- to C-terminus: ATP synthase gamma chain (291 aa).

This sequence belongs to the ATPase gamma chain family. F-type ATPases have 2 components, CF(1) - the catalytic core - and CF(0) - the membrane proton channel. CF(1) has five subunits: alpha(3), beta(3), gamma(1), delta(1), epsilon(1). CF(0) has three main subunits: a, b and c.

Its subcellular location is the cell inner membrane. In terms of biological role, produces ATP from ADP in the presence of a proton gradient across the membrane. The gamma chain is believed to be important in regulating ATPase activity and the flow of protons through the CF(0) complex. The chain is ATP synthase gamma chain from Pelodictyon phaeoclathratiforme (strain DSM 5477 / BU-1).